The chain runs to 186 residues: MKINGNEIRPGNVIEHEGGLWVAVKTNAVKPGKGGAYNQVELKNLINGTKLNERFRAAESVERVRLEQKDFSFLYEQGEALIFMDTETYEQLELQKDFVGDRAAFLQDGMMVTVELYEEKPIGIRLPDQVTLAITEADPVVKGQTAASSYKPAVLENGIRIPVPPFIASGERVIVDTNELTYISRA.

Belongs to the elongation factor P family.

It is found in the cytoplasm. The protein operates within protein biosynthesis; polypeptide chain elongation. Involved in peptide bond synthesis. Stimulates efficient translation and peptide-bond synthesis on native or reconstituted 70S ribosomes in vitro. Probably functions indirectly by altering the affinity of the ribosome for aminoacyl-tRNA, thus increasing their reactivity as acceptors for peptidyl transferase. The chain is Elongation factor P from Brucella abortus (strain S19).